The primary structure comprises 230 residues: MSGGKTQPPTGPRGKVVMLKTARKRSVASQRWLTRQLNDPYVAAAKAQGWRSRAAFKLIELDDKFGLISKGSRVIDLGAAPGGWTQVAMKRGAAVVVGVDLLPVDPVPGATLIQGDFNDDDMPARLSSLMGGKADLVMSDMAPNTTGHAATDHMRIIALTELALHFAFDALAPGGAFVAKVFQGGSEKQLLEPMKQRFASVRHAKPASSRKESSELYVVAKGFRPNGLQD.

G82, W84, D100, D116, and D140 together coordinate S-adenosyl-L-methionine. K180 functions as the Proton acceptor in the catalytic mechanism.

This sequence belongs to the class I-like SAM-binding methyltransferase superfamily. RNA methyltransferase RlmE family.

The protein resides in the cytoplasm. It carries out the reaction uridine(2552) in 23S rRNA + S-adenosyl-L-methionine = 2'-O-methyluridine(2552) in 23S rRNA + S-adenosyl-L-homocysteine + H(+). In terms of biological role, specifically methylates the uridine in position 2552 of 23S rRNA at the 2'-O position of the ribose in the fully assembled 50S ribosomal subunit. This is Ribosomal RNA large subunit methyltransferase E from Granulibacter bethesdensis (strain ATCC BAA-1260 / CGDNIH1).